A 126-amino-acid chain; its full sequence is Nucleoside diphosphate kinase B (126 aa).

Lys-6, Phe-37, Thr-68, Arg-79, and Asn-89 together coordinate ATP. The active-site Pros-phosphohistidine intermediate is His-92.

This sequence belongs to the NDK family. Mg(2+) is required as a cofactor.

The protein resides in the cytoplasm. It is found in the nucleus. It localises to the cell projection. Its subcellular location is the lamellipodium. The protein localises to the ruffle. The catalysed reaction is a 2'-deoxyribonucleoside 5'-diphosphate + ATP = a 2'-deoxyribonucleoside 5'-triphosphate + ADP. It catalyses the reaction a ribonucleoside 5'-diphosphate + ATP = a ribonucleoside 5'-triphosphate + ADP. Major role in the synthesis of nucleoside triphosphates other than ATP. In Merluccius capensis (Shallow-water Cape hake), this protein is Nucleoside diphosphate kinase B (nme2).